The sequence spans 324 residues: Adenosine kinase (324 aa).

Substrate contacts are provided by residues Ser-8, Asp-12, Ser-36, Gly-48, Asn-52, Phe-102, Phe-116, and 172-173 (QQ). ATP is bound by residues Asn-195, 223–228 (TLGPKG), and Gly-256. Asp-257 serves as a coordination point for substrate. Asp-257 acts as the Proton acceptor in catalysis.

Belongs to the carbohydrate kinase PfkB family. As to quaternary structure, homodimer. Mg(2+) serves as cofactor.

It carries out the reaction adenosine + ATP = AMP + ADP + H(+). The enzyme catalyses adenosine + GTP = GDP + AMP + H(+). It catalyses the reaction dGTP + adenosine = dGDP + AMP + H(+). It participates in purine metabolism; AMP biosynthesis via salvage pathway; AMP from adenosine: step 1/1. Functionally, catalyzes the phosphorylation of adenosine to adenosine monophosphate (AMP). Prefers dGTP and GTP to ATP as phosphate donors in vitro. This Mycobacterium bovis (strain ATCC BAA-935 / AF2122/97) protein is Adenosine kinase (adoK).